We begin with the raw amino-acid sequence, 571 residues long: Proline--tRNA ligase (571 aa).

This sequence belongs to the class-II aminoacyl-tRNA synthetase family. ProS type 1 subfamily. In terms of assembly, homodimer.

Its subcellular location is the cytoplasm. The catalysed reaction is tRNA(Pro) + L-proline + ATP = L-prolyl-tRNA(Pro) + AMP + diphosphate. Functionally, catalyzes the attachment of proline to tRNA(Pro) in a two-step reaction: proline is first activated by ATP to form Pro-AMP and then transferred to the acceptor end of tRNA(Pro). As ProRS can inadvertently accommodate and process non-cognate amino acids such as alanine and cysteine, to avoid such errors it has two additional distinct editing activities against alanine. One activity is designated as 'pretransfer' editing and involves the tRNA(Pro)-independent hydrolysis of activated Ala-AMP. The other activity is designated 'posttransfer' editing and involves deacylation of mischarged Ala-tRNA(Pro). The misacylated Cys-tRNA(Pro) is not edited by ProRS. The sequence is that of Proline--tRNA ligase from Pseudomonas putida (strain ATCC 700007 / DSM 6899 / JCM 31910 / BCRC 17059 / LMG 24140 / F1).